Reading from the N-terminus, the 573-residue chain is Multidrug and toxin extrusion protein 2 (573 aa).

At 1 to 46 (MEPAEDSLGATIQPPELVRVPRGRSLRILLGLRGALSPDVRREAAA) the chain is on the cytoplasmic side. The helical transmembrane segment at 47–67 (LVALAGPVFLAQLMIFLISIV) threads the bilayer. Residues 68-81 (SSIFCGHLGKVELD) lie on the Extracellular side of the membrane. Residues 82–102 (AVTLAVSVVNVTGISVGTGLA) form a helical membrane-spanning segment. At 103-122 (SACDTLMSQSFGGKNLKRVG) the chain is on the cytoplasmic side. Residues 123-143 (VILQRGILILLLCCFPCWAIF) traverse the membrane as a helical segment. The Extracellular segment spans residues 144-161 (LNTERLLLLLRQDPDVAR). Residues 162-182 (LAQVYVMICIPALPAAFLFQL) traverse the membrane as a helical segment. Residues 183–196 (QTRYLQSQGIIMPQ) lie on the Cytoplasmic side of the membrane. Residues 197–217 (VIVGIAANVVNVGMNAFLLYA) traverse the membrane as a helical segment. The Extracellular portion of the chain corresponds to 218 to 225 (LDLGVVGS). A helical transmembrane segment spans residues 226–246 (AWANTTSQFFLSALLFLYVWW). Residues 247-266 (KRIHIHTWGGWTRECFQEWS) are Cytoplasmic-facing. A helical transmembrane segment spans residues 267–286 (SYTRLAIPSMFMVCIEWWTF). The Extracellular portion of the chain corresponds to 287–304 (EIGTFLAGLVNVTELGAQ). The helical transmembrane segment at 305–325 (AVIYELASVAYMVPFGFGVAA) threads the bilayer. Over 326–345 (SVRVGNALGAGNADQARCSC) the chain is Cytoplasmic. Residues 346-366 (TTVLLCAGVCALLVGILLAAL) traverse the membrane as a helical segment. Over 367–379 (KDVVAYIFTNDKD) the chain is Extracellular. Residues 380–400 (IISLVSQVMPIFAPFHLFDAL) traverse the membrane as a helical segment. Topologically, residues 401 to 415 (AGTCGGVLRGTGKQK) are cytoplasmic. Residues 416-436 (IGAVLNTIGYYGFGFPIGVSL) traverse the membrane as a helical segment. The Extracellular segment spans residues 437–443 (MFAAKLG). Residues 444 to 464 (IIGLWAGLIVCVSFQAFSYLI) traverse the membrane as a helical segment. At 465 to 545 (YILRTNWSRV…VGEVLTGRQL (81 aa)) the chain is on the cytoplasmic side. Residues 546–566 (VFYRGMALTVSVAVLIAGIVV) form a helical membrane-spanning segment. Residues 567–573 (RVFNDRG) are Extracellular-facing.

It belongs to the multi antimicrobial extrusion (MATE) (TC 2.A.66.1) family. Expressed in testis; especially in testicular Leydig cells.

It is found in the cell membrane. Its function is as follows. Multidrug efflux pump that functions as a H(+)/organic cation antiporter. May mediate testosterone efflux from the Leydig cells in the testes. This chain is Multidrug and toxin extrusion protein 2 (Slc47a2), found in Mus musculus (Mouse).